Reading from the N-terminus, the 268-residue chain is Testis-specific serine/threonine-protein kinase 3 (268 aa).

In terms of domain architecture, Protein kinase spans 10 to 265 (YQLGKTIGEG…IEEVSWHPWL (256 aa)). Residues 16–24 (IGEGTYSKV) and K39 contribute to the ATP site. The active-site Proton acceptor is the D134. At S166 the chain carries Phosphoserine; by autocatalysis. T168 carries the phosphothreonine; by PDPK1 modification.

Belongs to the protein kinase superfamily. CAMK Ser/Thr protein kinase family. Mg(2+) serves as cofactor. It depends on Mn(2+) as a cofactor. In terms of processing, autophosphorylated at Ser-166. Phosphorylation at Thr-168 by PDPK1 activates the serine/threonine protein kinase activity. Developmentally expressed in testicular germ cells. In adult testis, expression was detected in round and condensing spermatids, but not in meiotic pachytene spermatocytes. Not expressed in brain, ovary, kidney, liver or early embryonic cells.

The protein localises to the cell projection. It is found in the cilium. Its subcellular location is the flagellum. The enzyme catalyses L-seryl-[protein] + ATP = O-phospho-L-seryl-[protein] + ADP + H(+). The catalysed reaction is L-threonyl-[protein] + ATP = O-phospho-L-threonyl-[protein] + ADP + H(+). Its activity is regulated as follows. Activated by phosphorylation on Thr-168 by PDPK1. Its function is as follows. Serine/threonine protein kinase required for spermatid development and male fertility. The polypeptide is Testis-specific serine/threonine-protein kinase 3 (Mus musculus (Mouse)).